A 427-amino-acid chain; its full sequence is Enolase (427 aa).

Q163 contacts (2R)-2-phosphoglycerate. The Proton donor role is filled by E205. Positions 242, 285, and 312 each coordinate Mg(2+). (2R)-2-phosphoglycerate contacts are provided by K337, R366, S367, and K388. The active-site Proton acceptor is the K337.

Belongs to the enolase family. Mg(2+) is required as a cofactor.

It is found in the cytoplasm. The protein resides in the secreted. Its subcellular location is the cell surface. The catalysed reaction is (2R)-2-phosphoglycerate = phosphoenolpyruvate + H2O. It functions in the pathway carbohydrate degradation; glycolysis; pyruvate from D-glyceraldehyde 3-phosphate: step 4/5. Its function is as follows. Catalyzes the reversible conversion of 2-phosphoglycerate (2-PG) into phosphoenolpyruvate (PEP). It is essential for the degradation of carbohydrates via glycolysis. This chain is Enolase, found in Albidiferax ferrireducens (strain ATCC BAA-621 / DSM 15236 / T118) (Rhodoferax ferrireducens).